Consider the following 179-residue polypeptide: Archaemetzincin (179 aa).

Position 128 (histidine 128) interacts with Zn(2+). Residue glutamate 129 is the Proton acceptor of the active site. The Zn(2+) site is built by histidine 132, histidine 138, cysteine 139, cysteine 144, cysteine 163, and cysteine 166.

It belongs to the peptidase M54 family. In terms of assembly, monomer. Zn(2+) is required as a cofactor.

Its function is as follows. Probable zinc metalloprotease whose natural substrate is unknown. This Methanocaldococcus jannaschii (strain ATCC 43067 / DSM 2661 / JAL-1 / JCM 10045 / NBRC 100440) (Methanococcus jannaschii) protein is Archaemetzincin.